The sequence spans 92 residues: RNA-binding protein Hfq (92 aa).

The 60-residue stretch at 9–68 (DPFLNALRRERVPVSVYLVNGIKLQGTIESFDQFVVLLRNTVSQMVYKHAISTVVPARNV) folds into the Sm domain. Residues 73–92 (GGGYVQSNEGNQAEDDDVEQ) are disordered.

This sequence belongs to the Hfq family. In terms of assembly, homohexamer.

Functionally, RNA chaperone that binds small regulatory RNA (sRNAs) and mRNAs to facilitate mRNA translational regulation in response to envelope stress, environmental stress and changes in metabolite concentrations. Also binds with high specificity to tRNAs. This chain is RNA-binding protein Hfq, found in Xanthomonas axonopodis pv. citri (strain 306).